The sequence spans 457 residues: uncharacterized protein (457 aa).

K75 carries the post-translational modification N6-(pyridoxal phosphate)lysine.

Pyridoxal 5'-phosphate is required as a cofactor.

This is an uncharacterized protein from Sinorhizobium fredii (strain NBRC 101917 / NGR234).